The primary structure comprises 373 residues: WAT1-related protein At4g30420 (373 aa).

10 consecutive transmembrane segments (helical) span residues 2–22, 29–49, 55–75, 94–114, 125–145, 173–193, 205–225, 244–264, 270–290, and 294–314; these read AMTM…ATLV, VFIL…LYLS, IAIS…SLIG, MGSA…FLAG, GLAK…MTLL, WLIG…WLIL, LSLS…VTFF, CLYA…WAIA, FSAL…ALFF, and IYTG…TVLW. EamA domains follow at residues 9–135 and 186–313; these read CYAG…TILC and CWSF…YTVL.

Belongs to the drug/metabolite transporter (DMT) superfamily. Plant drug/metabolite exporter (P-DME) (TC 2.A.7.4) family.

Its subcellular location is the membrane. This is WAT1-related protein At4g30420 from Arabidopsis thaliana (Mouse-ear cress).